Here is a 108-residue protein sequence, read N- to C-terminus: uncharacterized protein (108 aa).

2 helical membrane-spanning segments follow: residues 51–71 (VFAA…FCFL) and 86–106 (PLST…KSLL).

Its subcellular location is the membrane. This is an uncharacterized protein from Saccharomyces cerevisiae (strain ATCC 204508 / S288c) (Baker's yeast).